The sequence spans 79 residues: Small ribosomal subunit protein eS17 (79 aa).

It belongs to the eukaryotic ribosomal protein eS17 family.

This is Small ribosomal subunit protein eS17 from Saccharolobus islandicus (strain Y.N.15.51 / Yellowstone #2) (Sulfolobus islandicus).